The chain runs to 247 residues: Carboxy-S-adenosyl-L-methionine synthase (247 aa).

Residues tyrosine 40, 65-67 (GAS), 90-91 (DN), 122-123 (DI), asparagine 137, and arginine 204 each bind S-adenosyl-L-methionine.

It belongs to the class I-like SAM-binding methyltransferase superfamily. Cx-SAM synthase family. In terms of assembly, homodimer.

The enzyme catalyses prephenate + S-adenosyl-L-methionine = carboxy-S-adenosyl-L-methionine + 3-phenylpyruvate + H2O. Its function is as follows. Catalyzes the conversion of S-adenosyl-L-methionine (SAM) to carboxy-S-adenosyl-L-methionine (Cx-SAM). The polypeptide is Carboxy-S-adenosyl-L-methionine synthase (Pseudomonas entomophila (strain L48)).